The following is a 532-amino-acid chain: MKWSEMASVNATQQHLNFSSSWEEDSSDNSFDEWTHKSVPLRSPCRTPRIQRHRNRSITVSPSVPTSPIPYAAWKKLRLCDSPSTPKSLLSKSTMPCSSSKTCRSQRFLRLSTAFERVPSVNINPFTPDTVRRNSEHYKRKSQRSDDDEDYGPRSKEIQNSSEDESFFLPSKRPAVSARMLSRYESEFLELACIGVGEFGSVYRCVKRLDGCMYAIKRSRRPIAGSANEQLALKEVYAHAVLGHHPHVVRYYSAWAEDDHMIIQNEYCDGGSLHDAITEKREQGEFFSVPELRDLLLQVSMGLKYIHNSGLVHLDIKPSNIFICRRSTLSAGGEGDSEEEDESHSSGVVYKIGDLGHVTSISSPQVEEGDSRFLAYEVLREDYTHLPKADIFALGLTVLLAAGASPLPQNGDDWHRLRQGELPNLPHELPALFKDLLKSLLDPDPTARPSATALCRHDVLCKERAGKLATQLRKELNVEKFRTAMLERELKEARLAATSPQQSCQPGSLPKAKRKLVGRNVARSVSFGFPGY.

Residues 123–166 are disordered; it reads INPFTPDTVRRNSEHYKRKSQRSDDDEDYGPRSKEIQNSSEDES. Positions 188-465 constitute a Protein kinase domain; that stretch reads FLELACIGVG…RHDVLCKERA (278 aa). ATP contacts are provided by residues 194–202 and lysine 217; that span reads IGVGEFGSV. Aspartate 315 serves as the catalytic Proton acceptor. 2 residues coordinate Mg(2+): asparagine 320 and aspartate 354. Residues 469-495 are a coiled coil; it reads ATQLRKELNVEKFRTAMLERELKEARL.

It belongs to the protein kinase superfamily. Ser/Thr protein kinase family. WEE1 subfamily.

It is found in the nucleus. The enzyme catalyses L-tyrosyl-[protein] + ATP = O-phospho-L-tyrosyl-[protein] + ADP + H(+). In terms of biological role, oocyte-specific protein tyrosine kinase that phosphorylates and inhibits cdk1 and acts as a key regulator of meiosis. Required to maintain meiotic arrest in oocytes by phosphorylating cdk1 at 'Tyr-15', leading to inhibit cdk1 activity and prevent meiotic reentry. The protein is Wee1-like protein kinase 2 (wee2) of Danio rerio (Zebrafish).